The primary structure comprises 299 residues: Protease HtpX homolog (299 aa).

The next 2 membrane-spanning stretches (helical) occupy residues 15-35 (ILLL…GYLF) and 39-59 (GLGG…SMIF). Residue H143 coordinates Zn(2+). E144 is an active-site residue. H147 is a binding site for Zn(2+). 2 consecutive transmembrane segments (helical) span residues 158 to 178 (IAVA…RMMW) and 198 to 218 (IIML…ATLV). E227 serves as a coordination point for Zn(2+).

Belongs to the peptidase M48B family. It depends on Zn(2+) as a cofactor.

The protein resides in the cell membrane. The sequence is that of Protease HtpX homolog from Streptococcus pneumoniae (strain Hungary19A-6).